The primary structure comprises 175 residues: Translation initiation factor IF-3 (175 aa).

It belongs to the IF-3 family. Monomer.

It localises to the cytoplasm. Functionally, IF-3 binds to the 30S ribosomal subunit and shifts the equilibrium between 70S ribosomes and their 50S and 30S subunits in favor of the free subunits, thus enhancing the availability of 30S subunits on which protein synthesis initiation begins. The protein is Translation initiation factor IF-3 of Staphylococcus carnosus (strain TM300).